We begin with the raw amino-acid sequence, 336 residues long: Biotin synthase (336 aa).

Residues 55-288 form the Radical SAM core domain; that stretch reads GEAASLHACS…RTIIKFAAGR (234 aa). 3 residues coordinate [4Fe-4S] cluster: Cys73, Cys77, and Cys80. [2Fe-2S] cluster contacts are provided by Cys152, Cys213, and Lys283.

It belongs to the radical SAM superfamily. Biotin synthase family. As to quaternary structure, homodimer. Requires [4Fe-4S] cluster as cofactor. [2Fe-2S] cluster is required as a cofactor.

It catalyses the reaction (4R,5S)-dethiobiotin + (sulfur carrier)-SH + 2 reduced [2Fe-2S]-[ferredoxin] + 2 S-adenosyl-L-methionine = (sulfur carrier)-H + biotin + 2 5'-deoxyadenosine + 2 L-methionine + 2 oxidized [2Fe-2S]-[ferredoxin]. Its pathway is cofactor biosynthesis; biotin biosynthesis; biotin from 7,8-diaminononanoate: step 2/2. Its function is as follows. Catalyzes the conversion of dethiobiotin (DTB) to biotin by the insertion of a sulfur atom into dethiobiotin via a radical-based mechanism. In Chlorobium limicola (strain DSM 245 / NBRC 103803 / 6330), this protein is Biotin synthase.